The following is a 428-amino-acid chain: Adenylosuccinate synthetase (428 aa).

GTP contacts are provided by residues 13–19 (GDEGKGK) and 41–43 (GHT). The Proton acceptor role is filled by Asp14. Mg(2+) contacts are provided by Asp14 and Gly41. IMP is bound by residues 14–17 (DEGK), 39–42 (NAGH), Thr130, Arg144, Gln223, Thr238, and Arg302. The active-site Proton donor is the His42. A substrate-binding site is contributed by 298 to 304 (ASTGRRR). GTP is bound by residues Arg304, 330–332 (KLD), and 412–414 (STG).

It belongs to the adenylosuccinate synthetase family. As to quaternary structure, homodimer. Mg(2+) is required as a cofactor.

The protein resides in the cytoplasm. It carries out the reaction IMP + L-aspartate + GTP = N(6)-(1,2-dicarboxyethyl)-AMP + GDP + phosphate + 2 H(+). Its pathway is purine metabolism; AMP biosynthesis via de novo pathway; AMP from IMP: step 1/2. Functionally, plays an important role in the de novo pathway of purine nucleotide biosynthesis. Catalyzes the first committed step in the biosynthesis of AMP from IMP. In Dichelobacter nodosus (strain VCS1703A), this protein is Adenylosuccinate synthetase.